The following is a 358-amino-acid chain: Alanine racemase (358 aa).

K34 acts as the Proton acceptor; specific for D-alanine in catalysis. The residue at position 34 (K34) is an N6-(pyridoxal phosphate)lysine. R129 is a substrate binding site. Catalysis depends on Y254, which acts as the Proton acceptor; specific for L-alanine. M302 lines the substrate pocket.

This sequence belongs to the alanine racemase family. It depends on pyridoxal 5'-phosphate as a cofactor.

The enzyme catalyses L-alanine = D-alanine. The protein operates within amino-acid biosynthesis; D-alanine biosynthesis; D-alanine from L-alanine: step 1/1. In terms of biological role, catalyzes the interconversion of L-alanine and D-alanine. May also act on other amino acids. The protein is Alanine racemase (alr) of Vibrio atlanticus (strain LGP32) (Vibrio splendidus (strain Mel32)).